A 228-amino-acid polypeptide reads, in one-letter code: Probable septum site-determining protein MinC (228 aa).

This sequence belongs to the MinC family. In terms of assembly, interacts with MinD and FtsZ.

Cell division inhibitor that blocks the formation of polar Z ring septums. Rapidly oscillates between the poles of the cell to destabilize FtsZ filaments that have formed before they mature into polar Z rings. Prevents FtsZ polymerization. The polypeptide is Probable septum site-determining protein MinC (Bacillus cytotoxicus (strain DSM 22905 / CIP 110041 / 391-98 / NVH 391-98)).